Here is a 372-residue protein sequence, read N- to C-terminus: Chaperone protein DnaJ (372 aa).

Residues 5-69 (EFYDRLGVSK…QKRAAYDQYG (65 aa)) enclose the J domain. The CR-type zinc finger occupies 129–211 (GTEKEVKYHR…CHGTGHEKQA (83 aa)). 8 residues coordinate Zn(2+): C142, C145, C159, C162, C185, C188, C199, and C202. 4 CXXCXGXG motif repeats span residues 142–149 (CRTCNGSG), 159–166 (CGRCHGAG), 185–192 (CDVCHGRG), and 199–206 (CTTCHGTG).

Belongs to the DnaJ family. Homodimer. Zn(2+) serves as cofactor.

The protein localises to the cytoplasm. In terms of biological role, participates actively in the response to hyperosmotic and heat shock by preventing the aggregation of stress-denatured proteins and by disaggregating proteins, also in an autonomous, DnaK-independent fashion. Unfolded proteins bind initially to DnaJ; upon interaction with the DnaJ-bound protein, DnaK hydrolyzes its bound ATP, resulting in the formation of a stable complex. GrpE releases ADP from DnaK; ATP binding to DnaK triggers the release of the substrate protein, thus completing the reaction cycle. Several rounds of ATP-dependent interactions between DnaJ, DnaK and GrpE are required for fully efficient folding. Also involved, together with DnaK and GrpE, in the DNA replication of plasmids through activation of initiation proteins. The sequence is that of Chaperone protein DnaJ from Streptococcus pneumoniae (strain ATCC BAA-255 / R6).